Here is a 158-residue protein sequence, read N- to C-terminus: Class 10 plant pathogenesis-related protein 2A (158 aa).

Trans-zeatin is bound at residue aspartate 8. Residues proline 32, valine 35, and isoleucine 38 each contribute to the Ca(2+) site. Glutamate 60, histidine 69, tyrosine 81, and tyrosine 83 together coordinate trans-zeatin.

It belongs to the BetVI family.

Its subcellular location is the cytoplasm. It is found in the cytosol. Its function is as follows. Class II ribonuclease (RNase). Binds to cytokinins. Interacts with melatonin. The polypeptide is Class 10 plant pathogenesis-related protein 2A (Lupinus luteus (European yellow lupine)).